A 429-amino-acid polypeptide reads, in one-letter code: UDP-N-acetylglucosamine 1-carboxyvinyltransferase (429 aa).

Residue 22–23 (KN) participates in phosphoenolpyruvate binding. Arg-102 lines the UDP-N-acetyl-alpha-D-glucosamine pocket. Cys-126 acts as the Proton donor in catalysis. 2-(S-cysteinyl)pyruvic acid O-phosphothioketal is present on Cys-126. Residues 131–135 (RPVDL), Asp-316, and Ile-338 contribute to the UDP-N-acetyl-alpha-D-glucosamine site.

This sequence belongs to the EPSP synthase family. MurA subfamily.

Its subcellular location is the cytoplasm. The enzyme catalyses phosphoenolpyruvate + UDP-N-acetyl-alpha-D-glucosamine = UDP-N-acetyl-3-O-(1-carboxyvinyl)-alpha-D-glucosamine + phosphate. It functions in the pathway cell wall biogenesis; peptidoglycan biosynthesis. Its function is as follows. Cell wall formation. Adds enolpyruvyl to UDP-N-acetylglucosamine. The chain is UDP-N-acetylglucosamine 1-carboxyvinyltransferase from Nitrobacter winogradskyi (strain ATCC 25391 / DSM 10237 / CIP 104748 / NCIMB 11846 / Nb-255).